The sequence spans 93 residues: Small ribosomal subunit protein uS19 (93 aa).

The disordered stretch occupies residues G72–K93. Basic residues predominate over residues Y80–K93.

It belongs to the universal ribosomal protein uS19 family.

Functionally, protein S19 forms a complex with S13 that binds strongly to the 16S ribosomal RNA. This Aster yellows witches'-broom phytoplasma (strain AYWB) protein is Small ribosomal subunit protein uS19.